The following is a 258-amino-acid chain: MGVERIKAAFENGKKAFIPYVMGGDGGLEILKERIRFLDEAGASIVEIGIPFSDPVADGPTIQRAGKRALDSGVTVKGIFQALIEVREEVQIPFVLMTYLNPVLAFGKERFIENCMEAGVDGIIVPDLPYEEQDIIAPLLREANIALIPLVTVTSPIERIKKITSESEGFVYAVTVAGVTGVRQNFKDEIHSYLEKVKSHTHLPVVAGFGISTKEHVEEMVTICDGVVVGSKVIELLENEKREEICEFIQATKQKEEA.

Active-site proton acceptor residues include Glu-47 and Asp-58.

This sequence belongs to the TrpA family. Tetramer of two alpha and two beta chains.

The enzyme catalyses (1S,2R)-1-C-(indol-3-yl)glycerol 3-phosphate + L-serine = D-glyceraldehyde 3-phosphate + L-tryptophan + H2O. It participates in amino-acid biosynthesis; L-tryptophan biosynthesis; L-tryptophan from chorismate: step 5/5. Functionally, the alpha subunit is responsible for the aldol cleavage of indoleglycerol phosphate to indole and glyceraldehyde 3-phosphate. This chain is Tryptophan synthase alpha chain, found in Bacillus thuringiensis subsp. konkukian (strain 97-27).